A 379-amino-acid polypeptide reads, in one-letter code: Cyclic dinucleotide synthase CdnE (379 aa).

Gln-107, Ser-109, Asp-123, and Lys-179 together coordinate UTP. Asp-123 contacts Mg(2+). Asp-193 provides a ligand contact to Mg(2+). Residues Asn-229, Lys-257, and Ser-274 each coordinate UTP. The short motif at 328–330 (KIF) is the Pyrimidine specificity motif (R/Q)xW in donor pocket element.

This sequence belongs to the CD-NTase family. E02 subfamily. It depends on Mg(2+) as a cofactor.

The enzyme catalyses 2 UTP = c-di-UMP + 2 diphosphate. It carries out the reaction UTP + ATP = 3',3'-cUAMP + 2 diphosphate. It catalyses the reaction UTP + CTP = cyclic CMP-UMP + 2 diphosphate. Its function is as follows. Cyclic nucleotide synthase (second messenger synthase) of a CBASS antivirus system. CBASS (cyclic oligonucleotide-based antiphage signaling system) provides immunity against bacteriophage. The CD-NTase protein synthesizes cyclic nucleotides in response to infection; these serve as specific second messenger signals. The signals activate a diverse range of effectors, leading to bacterial cell death and thus abortive phage infection. The effector protein for this system is membrane protein Cap15. A type I-B(UU) CBASS system. Cyclic dinucleotide synthase that preferentially catalyzes the synthesis of 3',3'-cyclic UMP-UMP (c-di-UMP) and 3',3'-cyclic UMP-AMP, with minor amounts of 3',3'-cyclic UMP-CMP, which are second messengers for cell signal transduction. In terms of biological role, protects E.coli against phage infection. When the CBASS operon (cap15-cdnE) is introduced in E.coli MG1655 it protects against phages T2, T4, T5, T6, SECPhi4, SECPhi6, SECPhi17, SECPhi18 and SECPhi27, but not against phage T7. The polypeptide is Cyclic dinucleotide synthase CdnE (Yersinia aleksiciae).